Consider the following 514-residue polypeptide: Maturase K (514 aa).

Belongs to the intron maturase 2 family. MatK subfamily.

The protein resides in the plastid. Its subcellular location is the chloroplast. Functionally, usually encoded in the trnK tRNA gene intron. Probably assists in splicing its own and other chloroplast group II introns. This Encephalartos altensteinii (Altenstein's bread tree) protein is Maturase K.